We begin with the raw amino-acid sequence, 436 residues long: Adenylosuccinate synthetase (436 aa).

Residues 12 to 18 (GDEGKGK) and 40 to 42 (GHT) each bind GTP. Asp-13 serves as the catalytic Proton acceptor. Mg(2+) contacts are provided by Asp-13 and Gly-40. IMP is bound by residues 13 to 16 (DEGK), 38 to 41 (NAGH), Thr-128, Arg-142, Gln-223, Thr-238, and Arg-302. His-41 acts as the Proton donor in catalysis. Position 298–304 (298–304 (TTTGRRR)) interacts with substrate. GTP contacts are provided by residues Arg-304, 330 to 332 (KLD), and 412 to 414 (SLG).

This sequence belongs to the adenylosuccinate synthetase family. In terms of assembly, homodimer. Requires Mg(2+) as cofactor.

The protein localises to the cytoplasm. The catalysed reaction is IMP + L-aspartate + GTP = N(6)-(1,2-dicarboxyethyl)-AMP + GDP + phosphate + 2 H(+). The protein operates within purine metabolism; AMP biosynthesis via de novo pathway; AMP from IMP: step 1/2. Functionally, plays an important role in the de novo pathway of purine nucleotide biosynthesis. Catalyzes the first committed step in the biosynthesis of AMP from IMP. This is Adenylosuccinate synthetase from Prochlorococcus marinus (strain MIT 9312).